Consider the following 868-residue polypeptide: MLKGIHKYLLMCFGTVLFTVQANAARIMSNNPIKEDWQCKVVDGEWSCKRAKKPKSVFDKKLTKTEKEKALADDLAWVKKPSYFVGGYYSNDSQFTKALCESKKTDLSYEKSEFDNDGTLIASGNVQVLQCDQELYGNNAIINLNSNNSAIRSLVMAGDVIVKQPSTGIVIRTTELDADMNDGTYSTGEAYFRLAREMPKTRIYDKEHFSGYLRGYAKTFKKESSGDIVLSDGYITSGDPYDNAWKITGNNIDIDTNTHMAYVKNGYFEIQDIPVMYIPYFSHPIDDRRRSGFLYPGFVQNANSGIGISVPYYFNLAPNYDLMLQSVIWSQRGIMENGTFRYMTKYFQGQFEGSLVPYDFKEGKMRGSFTLSTTGQYENINTNFKYEYVSDQNYYNDFSAGNVNLVTKTLLDREFDLTYTNDYVDSGLTVLDYGVVNPLLTVDNTPYAKLPEVKLNLTSDGYTPDYLTLSAQTLNTFFYKTAGPANTNPGAPQGTNVNAFRAYESPKIAFNFNKTWGYLNPSLEVPIRYYQLKNSPTDTIQFANSSVTSVLPIFNIDAGAYFDKDYTNENGTYTSTLHPRLFYTYIPYQDQTNIPLFDTSLQNEQYMQMFQVNRFTGYDRINNANQLTYALEASTTNQEDGTTLASAKIGQMAYFADRKVNLCQGNSACPNPGLMDPFSTDTFSPIMTSFEFQVMKNIYLSAQVNYRVKQQNVDYQVYQLSYKDENENIFNVSYNNIANNWSSLTQQQIAEGAKPQPQETITLSTILNITDHWGIAALWNYNFQQKQIANIFAGLQYNAKSWAVRALWQKTAYTNQDPNNPTLLGPLVNTYMFEFELKGLGGIGNTSDISSRLQQINGYQVGEWGDGI.

An N-terminal signal peptide occupies residues 1-24; it reads MLKGIHKYLLMCFGTVLFTVQANA.

Belongs to the LptD family. In terms of assembly, component of the lipopolysaccharide transport and assembly complex. Interacts with LptE and LptA.

The protein localises to the cell outer membrane. Its function is as follows. Together with LptE, is involved in the assembly of lipopolysaccharide (LPS) at the surface of the outer membrane. This is LPS-assembly protein LptD from Francisella tularensis subsp. novicida (strain U112).